The sequence spans 431 residues: Chaperone SurA (431 aa).

A signal peptide spans 1-20; that stretch reads MKLTVVTFALLAFISFNTFA. PpiC domains follow at residues 171 to 272 and 281 to 381; these read QAEY…KIID and VAEL…QLMD.

It is found in the periplasm. It carries out the reaction [protein]-peptidylproline (omega=180) = [protein]-peptidylproline (omega=0). Chaperone involved in the correct folding and assembly of outer membrane proteins. Recognizes specific patterns of aromatic residues and the orientation of their side chains, which are found more frequently in integral outer membrane proteins. May act in both early periplasmic and late outer membrane-associated steps of protein maturation. The polypeptide is Chaperone SurA (Pseudoalteromonas atlantica (strain T6c / ATCC BAA-1087)).